A 269-amino-acid polypeptide reads, in one-letter code: Zinc finger protein SNAI2 (269 aa).

Residues 1–20 form an SNAG domain region; sequence MPRSFLVKKHFNASKKPNYS. The interval 81 to 117 is disordered; it reads SSSLGRVSPPPSSDTSSKDHSGSESPISDEEERLQPK. 4 consecutive C2H2-type zinc fingers follow at residues 129–151, 160–182, 186–208, and 214–236; these read FQCN…KQLH, FSCK…IRTH, CVCK…IRTH, and FSCP…LQTH. The C2H2-type 5; atypical zinc finger occupies 242–265; sequence YQCKNCSKTFSRMSLLHKHEESGC.

Belongs to the snail C2H2-type zinc-finger protein family. Interacts (via SNAG domain) with LIMD1 (via LIM domains), WTIP (via LIM domains) and AJUBA (via LIM domains). Interacts (via zinc fingers) with KPNA2, KPNB1, and TNPO1. May interact (via zinc fingers) with IPO7. In terms of processing, phosphorylated by GSK3B. Once phosphorylated, it becomes a target for ubiquitination. Post-translationally, ubiquitinated by the SCF(FBXO11) complex; ubiquitination requires previous GSK3B-mediated SNAI2 phosphorylation.

It localises to the nucleus. Its subcellular location is the cytoplasm. In terms of biological role, transcriptional repressor that modulates both activator-dependent and basal transcription. Involved in the generation and migration of neural crest cells. Plays a role in mediating RAF1-induced transcriptional repression of the TJ protein, occludin (OCLN) and subsequent oncogenic transformation of epithelial cells. Represses BRCA2 expression by binding to its E2-box-containing silencer and recruiting CTBP1 and HDAC1 in breast cells. In epidermal keratinocytes, binds to the E-box in ITGA3 promoter and represses its transcription. Involved in the regulation of ITGB1 and ITGB4 expression and cell adhesion and proliferation in epidermal keratinocytes. Binds to E-box2 domain of BSG and activates its expression during TGFB1-induced epithelial-mesenchymal transition (EMT) in hepatocytes. Represses E-Cadherin/CDH1 transcription via E-box elements. Involved in osteoblast maturation. Binds to RUNX2 and SOC9 promoters and may act as a positive and negative transcription regulator, respectively, in osteoblasts. Binds to CXCL12 promoter via E-box regions in mesenchymal stem cells and osteoblasts. Plays an essential role in TWIST1-induced EMT and its ability to promote invasion and metastasis. The protein is Zinc finger protein SNAI2 (Snai2) of Mus musculus (Mouse).